The following is a 354-amino-acid chain: Chorismate synthase (354 aa).

R48 lines the NADP(+) pocket. FMN contacts are provided by residues 125 to 127 (RAS), A280, 295 to 299 (KPIPS), and R321.

It belongs to the chorismate synthase family. In terms of assembly, homotetramer. It depends on FMNH2 as a cofactor.

It catalyses the reaction 5-O-(1-carboxyvinyl)-3-phosphoshikimate = chorismate + phosphate. It functions in the pathway metabolic intermediate biosynthesis; chorismate biosynthesis; chorismate from D-erythrose 4-phosphate and phosphoenolpyruvate: step 7/7. In terms of biological role, catalyzes the anti-1,4-elimination of the C-3 phosphate and the C-6 proR hydrogen from 5-enolpyruvylshikimate-3-phosphate (EPSP) to yield chorismate, which is the branch point compound that serves as the starting substrate for the three terminal pathways of aromatic amino acid biosynthesis. This reaction introduces a second double bond into the aromatic ring system. The chain is Chorismate synthase from Syntrophus aciditrophicus (strain SB).